A 100-amino-acid chain; its full sequence is Urease subunit gamma (100 aa).

It belongs to the urease gamma subunit family. As to quaternary structure, heterotrimer of UreA (gamma), UreB (beta) and UreC (alpha) subunits. Three heterotrimers associate to form the active enzyme.

It is found in the cytoplasm. The enzyme catalyses urea + 2 H2O + H(+) = hydrogencarbonate + 2 NH4(+). Its pathway is nitrogen metabolism; urea degradation; CO(2) and NH(3) from urea (urease route): step 1/1. This Clostridium perfringens protein is Urease subunit gamma.